A 248-amino-acid polypeptide reads, in one-letter code: 1-(5-phosphoribosyl)-5-[(5-phosphoribosylamino)methylideneamino] imidazole-4-carboxamide isomerase (248 aa).

Residue Asp8 is the Proton acceptor of the active site. Catalysis depends on Asp127, which acts as the Proton donor.

Belongs to the HisA/HisF family.

The protein localises to the cytoplasm. It catalyses the reaction 1-(5-phospho-beta-D-ribosyl)-5-[(5-phospho-beta-D-ribosylamino)methylideneamino]imidazole-4-carboxamide = 5-[(5-phospho-1-deoxy-D-ribulos-1-ylimino)methylamino]-1-(5-phospho-beta-D-ribosyl)imidazole-4-carboxamide. It participates in amino-acid biosynthesis; L-histidine biosynthesis; L-histidine from 5-phospho-alpha-D-ribose 1-diphosphate: step 4/9. The polypeptide is 1-(5-phosphoribosyl)-5-[(5-phosphoribosylamino)methylideneamino] imidazole-4-carboxamide isomerase (Thermotoga neapolitana (strain ATCC 49049 / DSM 4359 / NBRC 107923 / NS-E)).